The chain runs to 127 residues: Small ribosomal subunit protein uS11 (127 aa).

This sequence belongs to the universal ribosomal protein uS11 family. In terms of assembly, part of the 30S ribosomal subunit. Interacts with proteins S7 and S18. Binds to IF-3.

Functionally, located on the platform of the 30S subunit, it bridges several disparate RNA helices of the 16S rRNA. Forms part of the Shine-Dalgarno cleft in the 70S ribosome. In Chlorobium limicola (strain DSM 245 / NBRC 103803 / 6330), this protein is Small ribosomal subunit protein uS11.